Here is a 902-residue protein sequence, read N- to C-terminus: 26S proteasome regulatory subunit rpn-1 (902 aa).

A compositionally biased stretch (basic and acidic residues) spans 1–41; it reads MAQESDLSKTADKGKGKAVDDEKKHQDVDGKTPANGKKEEE. Residues 1-54 form a disordered region; it reads MAQESDLSKTADKGKGKAVDDEKKHQDVDGKTPANGKKEEEQNASEELSEEDQQ. Residues 42–52 show a composition bias toward acidic residues; that stretch reads QNASEELSEED. 8 PC repeats span residues 415 to 448, 449 to 487, 488 to 522, 525 to 559, 568 to 601, 645 to 680, 681 to 715, and 716 to 750; these read STVA…QIQA, GAYL…LIRV, ATIM…SMQV, MAAL…GSRL, ALGL…KPTA, AVLG…NIRR, AVPL…EVAI, and NAIF…DQES.

Belongs to the proteasome subunit S2 family.

Functionally, acts as a regulatory subunit of the 26 proteasome which is involved in the ATP-dependent degradation of ubiquitinated proteins. This Neurospora crassa (strain ATCC 24698 / 74-OR23-1A / CBS 708.71 / DSM 1257 / FGSC 987) protein is 26S proteasome regulatory subunit rpn-1 (rpn-1).